The chain runs to 485 residues: Glutamyl-tRNA(Gln) amidotransferase subunit A 1 (485 aa).

Catalysis depends on charge relay system residues Lys-79 and Ser-154. The active-site Acyl-ester intermediate is the Ser-178.

Belongs to the amidase family. GatA subfamily. In terms of assembly, heterotrimer of A, B and C subunits.

It catalyses the reaction L-glutamyl-tRNA(Gln) + L-glutamine + ATP + H2O = L-glutaminyl-tRNA(Gln) + L-glutamate + ADP + phosphate + H(+). In terms of biological role, allows the formation of correctly charged Gln-tRNA(Gln) through the transamidation of misacylated Glu-tRNA(Gln) in organisms which lack glutaminyl-tRNA synthetase. The reaction takes place in the presence of glutamine and ATP through an activated gamma-phospho-Glu-tRNA(Gln). In Clostridium acetobutylicum (strain ATCC 824 / DSM 792 / JCM 1419 / IAM 19013 / LMG 5710 / NBRC 13948 / NRRL B-527 / VKM B-1787 / 2291 / W), this protein is Glutamyl-tRNA(Gln) amidotransferase subunit A 1 (gatA1).